The primary structure comprises 317 residues: Beta-ketoacyl-[acyl-carrier-protein] synthase III (317 aa).

Active-site residues include cysteine 112 and histidine 244. The segment at 245-249 is ACP-binding; it reads QANLR. The active site involves asparagine 274.

Belongs to the thiolase-like superfamily. FabH family. In terms of assembly, homodimer.

It is found in the cytoplasm. The enzyme catalyses malonyl-[ACP] + acetyl-CoA + H(+) = 3-oxobutanoyl-[ACP] + CO2 + CoA. It functions in the pathway lipid metabolism; fatty acid biosynthesis. Catalyzes the condensation reaction of fatty acid synthesis by the addition to an acyl acceptor of two carbons from malonyl-ACP. Catalyzes the first condensation reaction which initiates fatty acid synthesis and may therefore play a role in governing the total rate of fatty acid production. Possesses both acetoacetyl-ACP synthase and acetyl transacylase activities. Its substrate specificity determines the biosynthesis of branched-chain and/or straight-chain of fatty acids. The sequence is that of Beta-ketoacyl-[acyl-carrier-protein] synthase III from Baumannia cicadellinicola subsp. Homalodisca coagulata.